Here is a 173-residue protein sequence, read N- to C-terminus: Peptide deformylase (173 aa).

Fe cation-binding residues include cysteine 98 and histidine 140. Glutamate 141 is a catalytic residue. Histidine 144 provides a ligand contact to Fe cation.

This sequence belongs to the polypeptide deformylase family. Fe(2+) serves as cofactor.

It catalyses the reaction N-terminal N-formyl-L-methionyl-[peptide] + H2O = N-terminal L-methionyl-[peptide] + formate. In terms of biological role, removes the formyl group from the N-terminal Met of newly synthesized proteins. Requires at least a dipeptide for an efficient rate of reaction. N-terminal L-methionine is a prerequisite for activity but the enzyme has broad specificity at other positions. The polypeptide is Peptide deformylase (Caulobacter vibrioides (strain ATCC 19089 / CIP 103742 / CB 15) (Caulobacter crescentus)).